The chain runs to 178 residues: Bifunctional protein PyrR (178 aa).

Substrate contacts are provided by residues 42 to 43, Arg83, 103 to 111, Arg136, and Val160; these read TR and DDVIYKGRT. The short motif at 99 to 111 is the PRPP-binding element; sequence VVLVDDVIYKGRT.

The protein belongs to the purine/pyrimidine phosphoribosyltransferase family. PyrR subfamily.

It carries out the reaction UMP + diphosphate = 5-phospho-alpha-D-ribose 1-diphosphate + uracil. Functionally, regulates the transcription of the pyrimidine nucleotide (pyr) operon in response to exogenous pyrimidines. In terms of biological role, also displays a weak uracil phosphoribosyltransferase activity which is not physiologically significant. The chain is Bifunctional protein PyrR from Synechocystis sp. (strain ATCC 27184 / PCC 6803 / Kazusa).